The sequence spans 366 residues: Ferrochelatase (366 aa).

The Fe cation site is built by His209 and Glu290.

Belongs to the ferrochelatase family.

It localises to the cytoplasm. It catalyses the reaction heme b + 2 H(+) = protoporphyrin IX + Fe(2+). It functions in the pathway porphyrin-containing compound metabolism; protoheme biosynthesis; protoheme from protoporphyrin-IX: step 1/1. Catalyzes the ferrous insertion into protoporphyrin IX. The protein is Ferrochelatase of Teredinibacter turnerae (strain ATCC 39867 / T7901).